A 260-amino-acid chain; its full sequence is Proteasome subunit alpha (260 aa).

This sequence belongs to the peptidase T1A family. The 20S proteasome core is composed of 14 alpha and 14 beta subunits that assemble into four stacked heptameric rings, resulting in a barrel-shaped structure. The two inner rings, each composed of seven catalytic beta subunits, are sandwiched by two outer rings, each composed of seven alpha subunits. The catalytic chamber with the active sites is on the inside of the barrel. Has a gated structure, the ends of the cylinder being occluded by the N-termini of the alpha-subunits. Is capped at one or both ends by the proteasome regulatory ATPase, PAN.

It localises to the cytoplasm. Its activity is regulated as follows. The formation of the proteasomal ATPase PAN-20S proteasome complex, via the docking of the C-termini of PAN into the intersubunit pockets in the alpha-rings, triggers opening of the gate for substrate entry. Interconversion between the open-gate and close-gate conformations leads to a dynamic regulation of the 20S proteasome proteolysis activity. In terms of biological role, component of the proteasome core, a large protease complex with broad specificity involved in protein degradation. In Thermococcus gammatolerans (strain DSM 15229 / JCM 11827 / EJ3), this protein is Proteasome subunit alpha.